The primary structure comprises 176 residues: Probable chorismate pyruvate-lyase (176 aa).

Substrate is bound by residues Arg-70, Leu-108, and Glu-166.

It belongs to the UbiC family.

The protein localises to the cytoplasm. The enzyme catalyses chorismate = 4-hydroxybenzoate + pyruvate. It functions in the pathway cofactor biosynthesis; ubiquinone biosynthesis. Removes the pyruvyl group from chorismate, with concomitant aromatization of the ring, to provide 4-hydroxybenzoate (4HB) for the ubiquinone pathway. The sequence is that of Probable chorismate pyruvate-lyase from Dechloromonas aromatica (strain RCB).